A 170-amino-acid polypeptide reads, in one-letter code: Adenine phosphoribosyltransferase (170 aa).

This sequence belongs to the purine/pyrimidine phosphoribosyltransferase family. As to quaternary structure, homodimer.

It is found in the cytoplasm. The enzyme catalyses AMP + diphosphate = 5-phospho-alpha-D-ribose 1-diphosphate + adenine. The protein operates within purine metabolism; AMP biosynthesis via salvage pathway; AMP from adenine: step 1/1. Catalyzes a salvage reaction resulting in the formation of AMP, that is energically less costly than de novo synthesis. The sequence is that of Adenine phosphoribosyltransferase from Fusobacterium nucleatum subsp. nucleatum (strain ATCC 25586 / DSM 15643 / BCRC 10681 / CIP 101130 / JCM 8532 / KCTC 2640 / LMG 13131 / VPI 4355).